Consider the following 320-residue polypeptide: Pyrroline-5-carboxylate reductase 2 (320 aa).

N-acetylserine is present on serine 2. Residues 6–11 (IGAGQL) and serine 34 contribute to the NADP(+) site. 9 residues coordinate NADPH: alanine 8, glutamine 10, leucine 11, serine 34, glutamate 36, asparagine 56, valine 70, lysine 71, and alanine 97. NADP(+) is bound by residues asparagine 56, 69–72 (AVKP), and 95–97 (CAA). Glutamate 164 is an L-proline binding site. Residue asparagine 230 coordinates NADPH. The L-proline site is built by alanine 237 and threonine 238. Low complexity predominate over residues 295-305 (PTVSTLTPSSP). Residues 295–320 (PTVSTLTPSSPGKLLTRSLALGGKKD) form a disordered region. Position 304 is a phosphoserine (serine 304).

The protein belongs to the pyrroline-5-carboxylate reductase family. As to quaternary structure, homodecamer; composed of 5 homodimers. Interacts with LTO1.

It is found in the cytoplasm. It localises to the mitochondrion. The enzyme catalyses L-proline + NADP(+) = (S)-1-pyrroline-5-carboxylate + NADPH + 2 H(+). The catalysed reaction is L-proline + NAD(+) = (S)-1-pyrroline-5-carboxylate + NADH + 2 H(+). The protein operates within amino-acid biosynthesis; L-proline biosynthesis; L-proline from L-glutamate 5-semialdehyde: step 1/1. Its function is as follows. Oxidoreductase that catalyzes the last step in proline biosynthesis, which corresponds to the reduction of pyrroline-5-carboxylate to L-proline using NAD(P)H. At physiologic concentrations, has higher specific activity in the presence of NADH. Involved in cellular response to oxidative stress. In some cell types, such as erythrocytes, its primary function may be the generation of NADP(+). This Macaca fascicularis (Crab-eating macaque) protein is Pyrroline-5-carboxylate reductase 2 (PYCR2).